The following is a 353-amino-acid chain: Diacetylchitobiose uptake system permease protein NgcF (353 aa).

The tract at residues 1 to 24 (MKDTIPTAETASRRPEPAARGGRP) is disordered. The next 6 helical transmembrane spans lie at 36 to 56 (FFLA…LIPF), 100 to 120 (LLAA…AVAI), 141 to 161 (IISF…WAQM), 197 to 217 (VMFV…IAAI), 254 to 274 (AYIY…AMVP), and 303 to 323 (TAMG…VFLV). Residues 95 to 320 (LRNVALLAAF…AVTLVFAALV (226 aa)) form the ABC transmembrane type-1 domain. The disordered stretch occupies residues 329–353 (GGEGESKRKAPGSRARRAAAKGGAR). The segment covering 337–353 (KAPGSRARRAAAKGGAR) has biased composition (basic residues).

It belongs to the binding-protein-dependent transport system permease family. The complex is composed of two ATP-binding proteins (MsiK), two transmembrane proteins (NgcF and NgcG) and a solute-binding protein (NgcE).

The protein resides in the cell membrane. Part of the ABC transporter complex NgcEFG-MsiK involved in N,N'-diacetylchitobiose ((GlcNAc)2) uptake. Responsible for the translocation of the substrate across the membrane. This is Diacetylchitobiose uptake system permease protein NgcF from Streptomyces coelicolor (strain ATCC BAA-471 / A3(2) / M145).